Consider the following 166-residue polypeptide: Putative universal stress protein SE_1385 (166 aa).

This sequence belongs to the universal stress protein A family.

Its subcellular location is the cytoplasm. In Staphylococcus epidermidis (strain ATCC 12228 / FDA PCI 1200), this protein is Putative universal stress protein SE_1385.